Consider the following 508-residue polypeptide: Transcription termination factor MTERF4, chloroplastic (508 aa).

Residues 1–79 (MMKSLFLFSA…PSLLDMERGR (79 aa)) constitute a chloroplast transit peptide. Over residues 28-49 (RLTASASTSASSPPRAGCSRGP) the composition is skewed to low complexity. Disordered regions lie at residues 28–69 (RLTA…LYAR) and 475–508 (FDTN…EFIE). The span at 484–508 (VEDEVEDEDLDEDSDYDSTDDEFIE) shows a compositional bias: acidic residues.

The protein belongs to the mTERF family.

It localises to the plastid. Its subcellular location is the chloroplast stroma. Transcription termination factor required for processing and steady-state levels of plastid transcripts. Required for splicing of the chloroplastic group II intron. Required for the accumulation of 16S and 23S ribosomes. In Oryza sativa subsp. japonica (Rice), this protein is Transcription termination factor MTERF4, chloroplastic.